A 742-amino-acid chain; its full sequence is Polyribonucleotide nucleotidyltransferase (742 aa).

Mg(2+)-binding residues include Asp515 and Asp521. The KH domain maps to 581–640; sequence PRIITITIPVDKIGEVIGPKGKIINQIQDDTGASISIEDDGTIYIGATNGEAAEAAKNAV. The S1 motif domain occupies 652–724; sequence GERYLGTVVK…DRGKLSLVPV (73 aa).

Belongs to the polyribonucleotide nucleotidyltransferase family. The cofactor is Mg(2+).

Its subcellular location is the cytoplasm. It carries out the reaction RNA(n+1) + phosphate = RNA(n) + a ribonucleoside 5'-diphosphate. Involved in mRNA degradation. Catalyzes the phosphorolysis of single-stranded polyribonucleotides processively in the 3'- to 5'-direction. The chain is Polyribonucleotide nucleotidyltransferase from Nocardioides sp. (strain ATCC BAA-499 / JS614).